The chain runs to 308 residues: D-alanine--D-alanine ligase (308 aa).

The ATP-grasp domain maps to 103-302 (KTVMKTAGVP…FDELVQWMVE (200 aa)). 130 to 184 (MEPPYVIKPVADGSSVGVYIITEQHQHPPQELFRDDWAYGDKLLVEKYVAGKELT) contributes to the ATP binding site. Positions 252, 269, and 271 each coordinate Mg(2+).

Belongs to the D-alanine--D-alanine ligase family. Mg(2+) serves as cofactor. Requires Mn(2+) as cofactor.

The protein resides in the cytoplasm. It carries out the reaction 2 D-alanine + ATP = D-alanyl-D-alanine + ADP + phosphate + H(+). The protein operates within cell wall biogenesis; peptidoglycan biosynthesis. In terms of biological role, cell wall formation. This Rhodopseudomonas palustris (strain BisA53) protein is D-alanine--D-alanine ligase.